Reading from the N-terminus, the 449-residue chain is Phosphomannomutase (449 aa).

Catalysis depends on Ser-97, which acts as the Phosphoserine intermediate. Mg(2+) contacts are provided by Ser-97, Asp-237, Asp-239, and Asp-241.

This sequence belongs to the phosphohexose mutase family. It depends on Mg(2+) as a cofactor.

The catalysed reaction is alpha-D-mannose 1-phosphate = D-mannose 6-phosphate. It functions in the pathway amino-acid biosynthesis. Catalyzes the formation of mannose-1-P from mannose-6-P. Can also use glucose-6-P. The sequence is that of Phosphomannomutase (manB) from Methanocaldococcus jannaschii (strain ATCC 43067 / DSM 2661 / JAL-1 / JCM 10045 / NBRC 100440) (Methanococcus jannaschii).